We begin with the raw amino-acid sequence, 1364 residues long: DNA-directed RNA polymerase subunit beta' (1364 aa).

The Zn(2+) site is built by C250, C317, C324, and C327. A disordered region spans residues 1318–1342 (TRHNIDPSASTNAAFTRPDVDNELK).

Belongs to the RNA polymerase beta' chain family. RpoC2 subfamily. As to quaternary structure, in cyanobacteria the RNAP catalytic core is composed of 2 alpha, 1 beta, 1 beta', 1 gamma and 1 omega subunit. When a sigma factor is associated with the core the holoenzyme is formed, which can initiate transcription. Zn(2+) serves as cofactor.

It catalyses the reaction RNA(n) + a ribonucleoside 5'-triphosphate = RNA(n+1) + diphosphate. Its function is as follows. DNA-dependent RNA polymerase catalyzes the transcription of DNA into RNA using the four ribonucleoside triphosphates as substrates. This chain is DNA-directed RNA polymerase subunit beta', found in Synechococcus sp. (strain CC9902).